The chain runs to 69 residues: uncharacterized protein (69 aa).

The tract at residues Leu-22–Met-48 is disordered. The segment covering Thr-37–Met-48 has biased composition (pro residues).

This is an uncharacterized protein from Lepidoptera (butterflies and moths).